Reading from the N-terminus, the 352-residue chain is tRNA (guanine-N(1)-)-methyltransferase (352 aa).

S-adenosyl-L-methionine is bound by residues G109 and 129–134; that span reads IGDYVL.

Belongs to the RNA methyltransferase TrmD family. In terms of assembly, homodimer.

It localises to the cytoplasm. It carries out the reaction guanosine(37) in tRNA + S-adenosyl-L-methionine = N(1)-methylguanosine(37) in tRNA + S-adenosyl-L-homocysteine + H(+). In terms of biological role, specifically methylates guanosine-37 in various tRNAs. In Chlamydia trachomatis serovar A (strain ATCC VR-571B / DSM 19440 / HAR-13), this protein is tRNA (guanine-N(1)-)-methyltransferase.